We begin with the raw amino-acid sequence, 169 residues long: Spore protein SP21 (169 aa).

2 disordered regions span residues 1–21 and 150–169; these read MADLSVRRGTGSTPQRTREWD and QPKRIQVASSGTEQKEHIKA. Positions 47 to 159 constitute a sHSP domain; sequence QGPPAFVPAF…QPKRIQVASS (113 aa).

It belongs to the small heat shock protein (HSP20) family.

Its function is as follows. May stabilize cellular components during stress and spore formation. The protein is Spore protein SP21 (hspA) of Stigmatella aurantiaca (strain DW4/3-1).